We begin with the raw amino-acid sequence, 209 residues long: Large ribosomal subunit protein uL3 (209 aa).

The disordered stretch occupies residues 118–152 (GFQGAIKRHGQSRGPMSHGSRYHRRPGSMGPVDPN).

The protein belongs to the universal ribosomal protein uL3 family. Part of the 50S ribosomal subunit. Forms a cluster with proteins L14 and L19.

Its function is as follows. One of the primary rRNA binding proteins, it binds directly near the 3'-end of the 23S rRNA, where it nucleates assembly of the 50S subunit. This is Large ribosomal subunit protein uL3 from Bacillus licheniformis (strain ATCC 14580 / DSM 13 / JCM 2505 / CCUG 7422 / NBRC 12200 / NCIMB 9375 / NCTC 10341 / NRRL NRS-1264 / Gibson 46).